Here is a 100-residue protein sequence, read N- to C-terminus: Aspartyl/glutamyl-tRNA(Asn/Gln) amidotransferase subunit C (100 aa).

This sequence belongs to the GatC family. As to quaternary structure, heterotrimer of A, B and C subunits.

It catalyses the reaction L-glutamyl-tRNA(Gln) + L-glutamine + ATP + H2O = L-glutaminyl-tRNA(Gln) + L-glutamate + ADP + phosphate + H(+). The catalysed reaction is L-aspartyl-tRNA(Asn) + L-glutamine + ATP + H2O = L-asparaginyl-tRNA(Asn) + L-glutamate + ADP + phosphate + 2 H(+). Its function is as follows. Allows the formation of correctly charged Asn-tRNA(Asn) or Gln-tRNA(Gln) through the transamidation of misacylated Asp-tRNA(Asn) or Glu-tRNA(Gln) in organisms which lack either or both of asparaginyl-tRNA or glutaminyl-tRNA synthetases. The reaction takes place in the presence of glutamine and ATP through an activated phospho-Asp-tRNA(Asn) or phospho-Glu-tRNA(Gln). In Rickettsia bellii (strain RML369-C), this protein is Aspartyl/glutamyl-tRNA(Asn/Gln) amidotransferase subunit C.